A 212-amino-acid polypeptide reads, in one-letter code: ER lumen protein-retaining receptor 2 (212 aa).

Topologically, residues 1 to 4 (MNIF) are lumenal. Residues 5 to 24 (RLTGDLSHLAAIVILLLKIW) traverse the membrane as a helical segment. Topologically, residues 25 to 32 (KTRSCAGI) are cytoplasmic. A helical membrane pass occupies residues 33–52 (SGKSQLLFALVFTTRYLDLF). The interaction with the K-D-E-L motif on target proteins stretch occupies residues 47–48 (RY). Residues 53 to 58 (TSFISL) are Lumenal-facing. The helical transmembrane segment at 59–79 (YNTSMKVIYLACSYATVYLIY) threads the bilayer. The Cytoplasmic segment spans residues 80–92 (LKFKATYDGNHDT). A helical transmembrane segment spans residues 93 to 110 (FRVEFLVVPVGGLSFLVN). Residues 111–116 (HDFSPL) are Lumenal-facing. A helical transmembrane segment spans residues 117 to 135 (EILWTFSIYLESVAILPQL). At 136–149 (FMISKTGEAETITT) the chain is on the cytoplasmic side. The chain crosses the membrane as a helical span at residues 150-168 (HYLFFLGLYRALYLVNWIW). Residues 159–169 (RALYLVNWIWR) form an interaction with the K-D-E-L motif on target proteins region. The Lumenal segment spans residues 169–178 (RFYFEGFFDL). The chain crosses the membrane as a helical span at residues 179–199 (IAVVAGVVQTILYCDFFYLYI). Over 200–212 (TKVLKGKKLSLPA) the chain is Cytoplasmic. Residues 204–207 (KGKK) are important for recycling of cargo proteins with the sequence motif K-D-E-L from the Golgi to the endoplasmic reticulum.

It belongs to the ERD2 family.

It is found in the endoplasmic reticulum membrane. Its subcellular location is the golgi apparatus membrane. The protein localises to the cytoplasmic vesicle. It localises to the COPI-coated vesicle membrane. In terms of biological role, membrane receptor that binds the K-D-E-L sequence motif in the C-terminal part of endoplasmic reticulum resident proteins and maintains their localization in that compartment by participating to their vesicle-mediated recycling back from the Golgi. Binding is pH dependent, and is optimal at pH 5-5.4. This chain is ER lumen protein-retaining receptor 2 (KDELR2), found in Homo sapiens (Human).